The chain runs to 268 residues: HLA class II histocompatibility antigen, DQ beta 2 chain (268 aa).

A signal peptide spans methionine 1–alanine 32. A beta-1 region spans residues arginine 33–valine 126. Residues arginine 33–lysine 229 are Extracellular-facing. 2 cysteine pairs are disulfide-bonded: cysteine 47/cysteine 110 and cysteine 148/cysteine 204. An N-linked (GlcNAc...) asparagine glycan is attached at asparagine 51. The interval glutamate 127–lysine 229 is beta-2. Residues proline 128 to threonine 216 form the Ig-like C1-type domain. The chain crosses the membrane as a helical span at residues methionine 230 to isoleucine 250. At arginine 251–histidine 268 the chain is on the cytoplasmic side.

The protein belongs to the MHC class II family. As to quaternary structure, heterodimer of an alpha and a beta subunit; also referred as MHC class II molecule. Dimer formation with HLA-DQA2, but not with HLA-DQA1, is required for efficient exit from the endoplasmic reticulum (ER). In the ER, forms a heterononamer; 3 MHC class II molecules bind to a CD74 homotrimer (also known as invariant chain or HLA class II histocompatibility antigen gamma chain). In the endosomal/lysosomal system; CD74 undergoes sequential degradation by various proteases; leaving a small fragment termed CLIP on each MHC class II molecule. MHC class II molecule interacts with HLA_DM, and HLA_DO in B-cells, in order to release CLIP and facilitate the binding of antigenic peptides. Association with HLA-DMA also occurs in skin Langerhans cells, in post-Golgi compartments. In terms of tissue distribution, restricted to skin Langerhans cells (at protein level).

The protein resides in the cell membrane. It localises to the endoplasmic reticulum membrane. It is found in the golgi apparatus. The protein localises to the trans-Golgi network membrane. Its subcellular location is the endosome membrane. The protein resides in the lysosome membrane. Binds peptides derived from antigens that access the endocytic route of antigen presenting cells (APC) and presents them on the cell surface for recognition by the CD4 T-cells. The peptide binding cleft accommodates peptides of 10-30 residues. The peptides presented by MHC class II molecules are generated mostly by degradation of proteins that access the endocytic route, where they are processed by lysosomal proteases and other hydrolases. Exogenous antigens that have been endocytosed by the APC are thus readily available for presentation via MHC II molecules, and for this reason this antigen presentation pathway is usually referred to as exogenous. As membrane proteins on their way to degradation in lysosomes as part of their normal turn-over are also contained in the endosomal/lysosomal compartments, exogenous antigens must compete with those derived from endogenous components. Autophagy is also a source of endogenous peptides, autophagosomes constitutively fuse with MHC class II loading compartments. In addition to APCs, other cells of the gastrointestinal tract, such as epithelial cells, express MHC class II molecules and CD74 and act as APCs, which is an unusual trait of the GI tract. To produce a MHC class II molecule that presents an antigen, three MHC class II molecules (heterodimers of an alpha and a beta chain) associate with a CD74 trimer in the ER to form a heterononamer. Soon after the entry of this complex into the endosomal/lysosomal system where antigen processing occurs, CD74 undergoes a sequential degradation by various proteases, including CTSS and CTSL, leaving a small fragment termed CLIP (class-II-associated invariant chain peptide). The removal of CLIP is facilitated by HLA-DM via direct binding to the alpha-beta-CLIP complex so that CLIP is released. HLA-DM stabilizes MHC class II molecules until primary high affinity antigenic peptides are bound. The MHC II molecule bound to a peptide is then transported to the cell membrane surface. In B-cells, the interaction between HLA-DM and MHC class II molecules is regulated by HLA-DO. Primary dendritic cells (DCs) also to express HLA-DO. Lysosomal microenvironment has been implicated in the regulation of antigen loading into MHC II molecules, increased acidification produces increased proteolysis and efficient peptide loading. The sequence is that of HLA class II histocompatibility antigen, DQ beta 2 chain (HLA-DQB2) from Homo sapiens (Human).